The sequence spans 165 residues: Cyclic pyranopterin monophosphate synthase (165 aa).

Residues 83-85 (FCH) and 120-121 (ME) contribute to the substrate site. Aspartate 135 is an active-site residue.

The protein belongs to the MoaC family. In terms of assembly, homohexamer; trimer of dimers.

It carries out the reaction (8S)-3',8-cyclo-7,8-dihydroguanosine 5'-triphosphate = cyclic pyranopterin phosphate + diphosphate. It participates in cofactor biosynthesis; molybdopterin biosynthesis. Its function is as follows. Catalyzes the conversion of (8S)-3',8-cyclo-7,8-dihydroguanosine 5'-triphosphate to cyclic pyranopterin monophosphate (cPMP). The sequence is that of Cyclic pyranopterin monophosphate synthase from Xanthomonas campestris pv. campestris (strain 8004).